A 1886-amino-acid chain; its full sequence is Highly reducing polyketide synthase (1886 aa).

Residues 11–434 (TQDVAIVGLS…GANAHAVLDD (424 aa)) enclose the Ketosynthase family 3 (KS3) domain. Active-site for beta-ketoacyl synthase activity residues include C182, H317, and H357. Residues 483–568 (FLFSGQDQQS…VNNDLANTKK (86 aa)) are malonyl-CoA:ACP transacylase (MAT) domain. An N-terminal hotdog fold region spans residues 616-750 (RSLIGAPQPS…GLLSIEYESS (135 aa)). The 311-residue stretch at 616–926 (RSLIGAPQPS…CTAISEATNP (311 aa)) folds into the PKS/mFAS DH domain. Residues 618 to 924 (LIGAPQPSYG…LHCTAISEAT (307 aa)) are dehydratase (DH) domain. Residue H648 is the Proton acceptor; for dehydratase activity of the active site. Residues 778–926 (HTTQSPKALY…CTAISEATNP (149 aa)) form a C-terminal hotdog fold region. Catalysis depends on D838, which acts as the Proton donor; for dehydratase activity. The tract at residues 1169–1480 (GMLDEIYFEA…AGKHMGKVAL (312 aa)) is enoylreductase (ER) domain. Residues 1503–1681 (ATYVLVGGFG…VSLDLGLMRD (179 aa)) form a catalytic ketoreductase (KRc) domain region. A Carrier domain is found at 1802–1879 (DVTDLVLEIL…DLVDKIVAKS (78 aa)). The residue at position 1839 (S1839) is an O-(pantetheine 4'-phosphoryl)serine.

The protein operates within mycotoxin biosynthesis. Its function is as follows. Highly reducing polyketide synthase; part of the gene cluster that mediates the biosynthesis of the selective antifungal agent ascochitine, an o-quinone methide that plays a possible protective role against other microbial competitors in nature and is considered to be important for pathogenicity of legume-associated Didymella species. The pathway probably begins with the synthesis of a keto-aldehyde intermediate by the ascochitine non-reducing polyketide synthase pksAC from successive condensations of 4 malonyl-CoA units, presumably with a simple acetyl-CoA starter unit. Release of the keto-aldehyde intermediate is consistent with the presence of the C-terminal reductive release domain. The HR-PKS (orf7) probably makes a diketide starter unit which is passed to the non-reducing polyketide synthase pksAC for further extension, producing ascochital and ascochitine. The aldehyde dehydrogenase (orf1), the 2-oxoglutarate-dependent dioxygenase (orf3) and the dehydrogenase (orf9) are probably involved in subsequent oxidations of methyl groups to the carboxylic acid of the heterocyclic ring. The ascochitine gene cluster also includes a gene encoding a short peptide with a cupin domain (orf2) that is often found in secondary metabolite gene clusters and which function has still to be determined. The protein is Highly reducing polyketide synthase of Didymella fabae (Leaf and pod spot disease fungus).